We begin with the raw amino-acid sequence, 175 residues long: Ribosome-binding factor A (175 aa).

Residues 125-175 are disordered; it reads TAKHAGEADPYKSDAPEDVDIDEDDFDEEDIDLAGDDDIDEDANKDADSSK. Residues 128 to 139 are compositionally biased toward basic and acidic residues; that stretch reads HAGEADPYKSDA. Positions 140 to 165 are enriched in acidic residues; it reads PEDVDIDEDDFDEEDIDLAGDDDIDE. Over residues 166–175 the composition is skewed to basic and acidic residues; sequence DANKDADSSK.

Belongs to the RbfA family. In terms of assembly, monomer. Binds 30S ribosomal subunits, but not 50S ribosomal subunits or 70S ribosomes.

The protein localises to the cytoplasm. One of several proteins that assist in the late maturation steps of the functional core of the 30S ribosomal subunit. Associates with free 30S ribosomal subunits (but not with 30S subunits that are part of 70S ribosomes or polysomes). Required for efficient processing of 16S rRNA. May interact with the 5'-terminal helix region of 16S rRNA. The protein is Ribosome-binding factor A of Pseudarthrobacter chlorophenolicus (strain ATCC 700700 / DSM 12829 / CIP 107037 / JCM 12360 / KCTC 9906 / NCIMB 13794 / A6) (Arthrobacter chlorophenolicus).